Reading from the N-terminus, the 263-residue chain is Copper homeostasis protein cutC homolog (263 aa).

The protein belongs to the CutC family.

Involved in copper homeostasis. This chain is Copper homeostasis protein cutC homolog, found in Drosophila melanogaster (Fruit fly).